The chain runs to 286 residues: Protease HtpX (286 aa).

2 helical membrane-spanning segments follow: residues 4 to 24 and 33 to 53; these read ILLF…ILSL and TGLL…SLFL. Histidine 139 is a Zn(2+) binding site. Residue glutamate 140 is part of the active site. Residue histidine 143 coordinates Zn(2+). 2 consecutive transmembrane segments (helical) span residues 147–167 and 186–206; these read GDMV…IFVS and IYFL…SMIA. Residue glutamate 214 coordinates Zn(2+).

This sequence belongs to the peptidase M48B family. Zn(2+) serves as cofactor.

It is found in the cell inner membrane. This is Protease HtpX from Pasteurella multocida (strain Pm70).